A 105-amino-acid polypeptide reads, in one-letter code: Spermatogenesis-associated protein 8 (105 aa).

Expressed at high levels in adult testis, at moderate levels in sperm and at low levels in fetal testis. Not detected in other tissues.

The protein is Spermatogenesis-associated protein 8 (SPATA8) of Homo sapiens (Human).